The sequence spans 215 residues: 5'-deoxynucleotidase YGK1 (215 aa).

Residues 58–164 (ISDHMYRMGL…VKDIDKYEML (107 aa)) enclose the HD domain. Residues histidine 61, histidine 89, aspartate 90, glutamate 93, aspartate 98, isoleucine 99, and aspartate 159 each contribute to the a divalent metal cation site.

Belongs to the HDDC2 family. As to quaternary structure, homodimer. It depends on Mn(2+) as a cofactor. Co(2+) is required as a cofactor. Requires Mg(2+) as cofactor.

The catalysed reaction is a 2'-deoxyribonucleoside 5'-phosphate + H2O = a 2'-deoxyribonucleoside + phosphate. Catalyzes the dephosphorylation of the nucleoside 5'-monophosphates deoxyadenosine monophosphate (dAMP), deoxycytidine monophosphate (dCMP), deoxyguanosine monophosphate (dGMP) and deoxythymidine monophosphate (dTMP). In Saccharomyces cerevisiae (strain ATCC 204508 / S288c) (Baker's yeast), this protein is 5'-deoxynucleotidase YGK1.